The primary structure comprises 571 residues: MRTSKYLLSTLKETPNDAEVVSHQLMLRAGMIRKLASGLYTWLPTGLRVLRKVENIVRQEIDNAGAIETLMPVVQPFELWEETGRSEKMGPELLRFTDRHVRPFVLSPTAEEVITALVRNEVSSYKQLPINLYQIQTKFRDERRPRFGVMRAREFCMMDAYSFDIDKAGLEKSYQAMHDAYCKAFDRMGLEYRPVLADSGAIGGNGSQEFHVLAESGEDLIAFSTESDYAANIEKAEAVAPAVERAAPTQEMTLVDTPNAKTIAELVEQHGISIEKTVKTLFVKASDAIEAPIVALIIRGDHELNEIKAENLAEVATPLEMATEEEMRELIGAGAGSLGPVGLKLPFIVDRSVAVMSDFGAGANIDGKHYFGINWGRDVELGQVADLRNVVEGDPSPCGKGTLMLKRGIEVGHIFQLGNVYSEAMNCGVLDSNGKNVILEMGCYGIGVSRVVAAAIEQNNDKYGIIWPDALAPFQVAIVPMNMHKSERVQEAAEKLYAELTAMGIEVLFDDRKERPGVMFSDMELIGIPHTIVIGDRSMDEGHFEYKNRRSGEKTPVAMADIVEYIKAQLE.

It belongs to the class-II aminoacyl-tRNA synthetase family. ProS type 1 subfamily. In terms of assembly, homodimer.

The protein resides in the cytoplasm. It carries out the reaction tRNA(Pro) + L-proline + ATP = L-prolyl-tRNA(Pro) + AMP + diphosphate. In terms of biological role, catalyzes the attachment of proline to tRNA(Pro) in a two-step reaction: proline is first activated by ATP to form Pro-AMP and then transferred to the acceptor end of tRNA(Pro). As ProRS can inadvertently accommodate and process non-cognate amino acids such as alanine and cysteine, to avoid such errors it has two additional distinct editing activities against alanine. One activity is designated as 'pretransfer' editing and involves the tRNA(Pro)-independent hydrolysis of activated Ala-AMP. The other activity is designated 'posttransfer' editing and involves deacylation of mischarged Ala-tRNA(Pro). The misacylated Cys-tRNA(Pro) is not edited by ProRS. The sequence is that of Proline--tRNA ligase from Vibrio vulnificus (strain YJ016).